Reading from the N-terminus, the 354-residue chain is MHNELQQKLAVLHKLLQDNKADAILIGSDQNRFWLTGFPSSAGWLVVHKQRVNLFIDGRYFEAAKTAIDPLVKVELFTTYKQVKALCEQVGVKHLLIEGDYLTFNYQNFIKELCAQYTVINAQEIRRQKLPSEILAIEKVVEITRKVAVKLKRFIQPGMTELFIAQWITDQLVKAGGAKNSFDPIVATGKNGANPHHKPSKLKVKSGDFVTCDFGTIYNGYCSDITRTFLVGKKPNNEVLLKAYKKVDEANMAGINAANTQLTGAEVDKVCRDIIEASEFKDYFVHSTGHGVGLDIHEMPNVSTSYNKLLCENAVITIEPGIYIPSVGGIRIEDMVLVKDHKSVWLSAKIPRAF.

Mn(2+) contacts are provided by aspartate 213, aspartate 224, histidine 290, glutamate 319, and glutamate 333.

It belongs to the peptidase M24B family. The cofactor is Mn(2+).

The enzyme catalyses Release of any N-terminal amino acid, including proline, that is linked to proline, even from a dipeptide or tripeptide.. The chain is Putative Xaa-Pro aminopeptidase (pepP) from Mycoplasma pneumoniae (strain ATCC 29342 / M129 / Subtype 1) (Mycoplasmoides pneumoniae).